Reading from the N-terminus, the 544-residue chain is Chaperonin GroEL 1 (544 aa).

ATP is bound by residues 29–32 (TLGP), 86–90 (DGTTT), Gly413, 479–481 (NAA), and Asp495.

The protein belongs to the chaperonin (HSP60) family. Forms a cylinder of 14 subunits composed of two heptameric rings stacked back-to-back. Interacts with the co-chaperonin GroES.

It is found in the cytoplasm. The catalysed reaction is ATP + H2O + a folded polypeptide = ADP + phosphate + an unfolded polypeptide.. Together with its co-chaperonin GroES, plays an essential role in assisting protein folding. The GroEL-GroES system forms a nano-cage that allows encapsulation of the non-native substrate proteins and provides a physical environment optimized to promote and accelerate protein folding. The chain is Chaperonin GroEL 1 from Parasynechococcus marenigrum (strain WH8102).